The primary structure comprises 339 residues: Cathepsin B (339 aa).

The signal sequence occupies residues 1 to 17 (MWQLWASLCCLLVLANA). A propeptide spans 18–79 (RSRPSFHPLS…QRVMFTEDLK (62 aa)) (activation peptide). 6 disulfides stabilise this stretch: C93–C122, C105–C150, C141–C207, C142–C146, C179–C211, and C187–C198. C108 is a catalytic residue. N192 is a glycosylation site (N-linked (GlcNAc...) asparagine). K220 carries the N6-acetyllysine modification. Catalysis depends on residues H278 and N298. The propeptide occupies 334–339 (QYWEKI).

It belongs to the peptidase C1 family. As to quaternary structure, dimer of a heavy chain and a light chain cross-linked by a disulfide bond. Interacts with SRPX2. Directly interacts with SHKBP1. As to expression, expressed in the stratum spinosum of the epidermis. Weak expression is detected in the stratum granulosum.

The protein resides in the lysosome. The protein localises to the melanosome. It localises to the secreted. Its subcellular location is the extracellular space. It is found in the apical cell membrane. The enzyme catalyses Hydrolysis of proteins with broad specificity for peptide bonds. Preferentially cleaves -Arg-Arg-|-Xaa bonds in small molecule substrates (thus differing from cathepsin L). In addition to being an endopeptidase, shows peptidyl-dipeptidase activity, liberating C-terminal dipeptides.. Inhibited by leupeptin. In terms of biological role, thiol protease which is believed to participate in intracellular degradation and turnover of proteins. Cleaves matrix extracellular phosphoglycoprotein MEPE. Involved in the solubilization of cross-linked TG/thyroglobulin in the thyroid follicle lumen. Has also been implicated in tumor invasion and metastasis. This chain is Cathepsin B (CTSB), found in Homo sapiens (Human).